The sequence spans 599 residues: Elongation factor 4 (599 aa).

Positions 5–187 (SHIRNFSIIA…RLVAVIPPPT (183 aa)) constitute a tr-type G domain. GTP is bound by residues 17–22 (DHGKST) and 134–137 (NKMD).

It belongs to the TRAFAC class translation factor GTPase superfamily. Classic translation factor GTPase family. LepA subfamily.

Its subcellular location is the cell inner membrane. It carries out the reaction GTP + H2O = GDP + phosphate + H(+). Required for accurate and efficient protein synthesis under certain stress conditions. May act as a fidelity factor of the translation reaction, by catalyzing a one-codon backward translocation of tRNAs on improperly translocated ribosomes. Back-translocation proceeds from a post-translocation (POST) complex to a pre-translocation (PRE) complex, thus giving elongation factor G a second chance to translocate the tRNAs correctly. Binds to ribosomes in a GTP-dependent manner. This chain is Elongation factor 4, found in Stutzerimonas stutzeri (strain A1501) (Pseudomonas stutzeri).